The chain runs to 189 residues: Ribonuclease M5 2 (189 aa).

The region spanning 8–91 (SQVIVAEGRD…VFLKRDEAVP (84 aa)) is the Toprim domain. 3 residues coordinate Mg(2+): Glu14, Asp60, and Asp62.

Belongs to the ribonuclease M5 family. It depends on Mg(2+) as a cofactor.

The protein localises to the cytoplasm. It catalyses the reaction Endonucleolytic cleavage of RNA, removing 21 and 42 nucleotides, respectively, from the 5'- and 3'-termini of a 5S-rRNA precursor.. Required for correct processing of both the 5' and 3' ends of 5S rRNA precursor. Cleaves both sides of a double-stranded region yielding mature 5S rRNA in one step. The protein is Ribonuclease M5 2 of Ligilactobacillus salivarius (strain UCC118) (Lactobacillus salivarius).